Reading from the N-terminus, the 99-residue chain is Thylakoid membrane protein ssl2009 (99 aa).

A helical transmembrane segment spans residues Gly-10–Ala-30. Residues Asn-50–His-84 adopt a coiled-coil conformation.

It is found in the cellular thylakoid membrane. In Synechocystis sp. (strain ATCC 27184 / PCC 6803 / Kazusa), this protein is Thylakoid membrane protein ssl2009.